The sequence spans 278 residues: Sulfur carrier protein FdhD (278 aa).

The active-site Cysteine persulfide intermediate is the cysteine 121. 260–265 is a Mo-bis(molybdopterin guanine dinucleotide) binding site; the sequence is FCKPGR.

The protein belongs to the FdhD family.

Its subcellular location is the cytoplasm. Required for formate dehydrogenase (FDH) activity. Acts as a sulfur carrier protein that transfers sulfur from IscS to the molybdenum cofactor prior to its insertion into FDH. This is Sulfur carrier protein FdhD from Salmonella heidelberg (strain SL476).